Consider the following 216-residue polypeptide: Large ribosomal subunit protein uL1z (216 aa).

Belongs to the universal ribosomal protein uL1 family. As to quaternary structure, interacts with the GTPase NUG2.

In Arabidopsis thaliana (Mouse-ear cress), this protein is Large ribosomal subunit protein uL1z (RPL10AA).